We begin with the raw amino-acid sequence, 708 residues long: UvrABC system protein B (708 aa).

Residues 32–419 form the Helicase ATP-binding domain; that stretch reads EGIQSGKTAQ…GGEVVEQIIR (388 aa). An ATP-binding site is contributed by 45 to 52; sequence GATGTGKT. Residues 98-121 carry the Beta-hairpin motif; that stretch reads YYDYYQPEAYIPQRDVYIEKDSSI. Positions 436-598 constitute a Helicase C-terminal domain; sequence QVTHLLEQVR…IVPKTVRKSI (163 aa). In terms of domain architecture, UVR spans 627 to 662; sequence IEYVDKLEQEMLAAAEDLEFERAARLRDRVLQLKEH. Residues 668 to 708 are disordered; it reads SEVEIVDEKSAGKSGGRGRGRRGAKKKGASKGTKIPRPKRG. A compositionally biased stretch (basic residues) spans 683–708; sequence GRGRGRRGAKKKGASKGTKIPRPKRG.

It belongs to the UvrB family. As to quaternary structure, forms a heterotetramer with UvrA during the search for lesions. Interacts with UvrC in an incision complex.

The protein localises to the cytoplasm. The UvrABC repair system catalyzes the recognition and processing of DNA lesions. A damage recognition complex composed of 2 UvrA and 2 UvrB subunits scans DNA for abnormalities. Upon binding of the UvrA(2)B(2) complex to a putative damaged site, the DNA wraps around one UvrB monomer. DNA wrap is dependent on ATP binding by UvrB and probably causes local melting of the DNA helix, facilitating insertion of UvrB beta-hairpin between the DNA strands. Then UvrB probes one DNA strand for the presence of a lesion. If a lesion is found the UvrA subunits dissociate and the UvrB-DNA preincision complex is formed. This complex is subsequently bound by UvrC and the second UvrB is released. If no lesion is found, the DNA wraps around the other UvrB subunit that will check the other stand for damage. This is UvrABC system protein B from Rhodopirellula baltica (strain DSM 10527 / NCIMB 13988 / SH1).